The primary structure comprises 107 residues: U1-lycotoxin-Ls1m (107 aa).

The signal sequence occupies residues 1 to 20; sequence MMKVLVVVALLVTLISYSSS. Positions 21–41 are excised as a propeptide; that stretch reads EGIDDLEADELLSLMANEQTR. Disulfide bonds link Cys-44-Cys-59, Cys-51-Cys-68, Cys-58-Cys-86, and Cys-70-Cys-84.

The protein belongs to the neurotoxin 19 (CSTX) family. 04 (U1-Lctx) subfamily. As to expression, expressed by the venom gland.

Its subcellular location is the secreted. The protein is U1-lycotoxin-Ls1m of Lycosa singoriensis (Wolf spider).